Consider the following 657-residue polypeptide: Archaeal Lon protease (657 aa).

Residues 1-123 (MEENIESVEE…KAEREKRDRS (123 aa)) are Cytoplasmic-facing. An ATP-binding site is contributed by 57–64 (GEPGTGKS). A helical transmembrane segment spans residues 124-144 (RSIMFVIFSVVLLGIIAAIVL). Residue R145 is a topological domain, extracellular. The chain crosses the membrane as a helical span at residues 146–166 (SITLIFFAIMAAAFLYMAMAF). Residues 167 to 657 (NPVIRNERAM…ATTRAGNNAA (491 aa)) lie on the Cytoplasmic side of the membrane. In terms of domain architecture, Lon proteolytic spans 433–618 (GSVVGMVNGL…EDVLRVALVN (186 aa)). Residues S525 and K568 contribute to the active site.

Belongs to the peptidase S16 family. Archaeal LonB subfamily. As to quaternary structure, homohexamer. Organized in a ring with a central cavity.

Its subcellular location is the cell membrane. Functionally, ATP-dependent serine protease that mediates the selective degradation of mutant and abnormal proteins as well as certain short-lived regulatory proteins. Degrades polypeptides processively. This Thermoplasma acidophilum (strain ATCC 25905 / DSM 1728 / JCM 9062 / NBRC 15155 / AMRC-C165) protein is Archaeal Lon protease.